We begin with the raw amino-acid sequence, 364 residues long: MSGNTFGKLFTVTTFGESHGAALGCIIDGCPPGLELSEEDMQRDLDRRKPGTSRHTTQRREADEVRILSGVFEGKTTGTPIGLIIENTDQRSKDYSRIAAQFRPAHADYTYHHKYGARDYRGGGRSSARETAMRVAAGAVARKFLEQRLGIKVRGYLSQLGPIKTDKLDWEQVHQNPFFCPDADKVSEMEAYMDALRKEGDSIGARINVVAEGVPPGLGEPIFDRLDADLAHALMSINAVKGVEIGAGFDCIEQKGTEHRDEMTPEGFLSNNAGGVLGGISSGQPIVASIALKPTSSLRLPGKGIDVDGNPVEVITTGRHDPCVGIRATPIAEAMMAIVLMDHYLRHRGQNGDVEVTTPVLGQL.

Residues R48 and R54 each coordinate NADP(+). FMN-binding positions include 125-127 (RSS), 238-239 (NA), G278, 293-297 (KPTSS), and R319.

This sequence belongs to the chorismate synthase family. In terms of assembly, homotetramer. It depends on FMNH2 as a cofactor.

The enzyme catalyses 5-O-(1-carboxyvinyl)-3-phosphoshikimate = chorismate + phosphate. Its pathway is metabolic intermediate biosynthesis; chorismate biosynthesis; chorismate from D-erythrose 4-phosphate and phosphoenolpyruvate: step 7/7. In terms of biological role, catalyzes the anti-1,4-elimination of the C-3 phosphate and the C-6 proR hydrogen from 5-enolpyruvylshikimate-3-phosphate (EPSP) to yield chorismate, which is the branch point compound that serves as the starting substrate for the three terminal pathways of aromatic amino acid biosynthesis. This reaction introduces a second double bond into the aromatic ring system. The protein is Chorismate synthase of Marinobacter nauticus (strain ATCC 700491 / DSM 11845 / VT8) (Marinobacter aquaeolei).